Here is a 184-residue protein sequence, read N- to C-terminus: Ribosome maturation factor RimM (184 aa).

Residues P106–F184 enclose the PRC barrel domain.

This sequence belongs to the RimM family. In terms of assembly, binds ribosomal protein uS19.

The protein localises to the cytoplasm. In terms of biological role, an accessory protein needed during the final step in the assembly of 30S ribosomal subunit, possibly for assembly of the head region. Essential for efficient processing of 16S rRNA. May be needed both before and after RbfA during the maturation of 16S rRNA. It has affinity for free ribosomal 30S subunits but not for 70S ribosomes. This is Ribosome maturation factor RimM from Chromohalobacter salexigens (strain ATCC BAA-138 / DSM 3043 / CIP 106854 / NCIMB 13768 / 1H11).